The following is a 359-amino-acid chain: MQAATVVINRRALRHNLQRLRELAPASKMVAVVKANAYGHGLLETARTLPDADAFGVARLEEALRLRAGGITKPVLLLEGFFDARDLPTISAQHFHTAVHNEEQLAALEEASLDEPVTVWMKLDTGMHRLGVRPEQAEAFYHRLTQCKNVRQPVNIVSHFARADEPKCGATEKQLAIFNTFCEGKPGQRSIAASGGILLWPQSHFDWVRPGIILYGVSPLEDRSTGADFGCQPVMSLTSSLIAVREHKVGEPVGYGGTWISERDTRLGVVAMGYGDGYPRAAPSGTPVLVNGREVPIVGRVAMDMICVDLGPQAQDKAGDPVILWGEGLPVERIAEMTKVSAYELITRLTSRVAMKYVD.

Lys-34 acts as the Proton acceptor; specific for D-alanine in catalysis. Position 34 is an N6-(pyridoxal phosphate)lysine (Lys-34). Residue Arg-129 participates in substrate binding. Tyr-255 serves as the catalytic Proton acceptor; specific for L-alanine. Met-303 is a binding site for substrate.

It belongs to the alanine racemase family. Pyridoxal 5'-phosphate is required as a cofactor.

It carries out the reaction L-alanine = D-alanine. Its pathway is amino-acid biosynthesis; D-alanine biosynthesis; D-alanine from L-alanine: step 1/1. It functions in the pathway cell wall biogenesis; peptidoglycan biosynthesis. Functionally, catalyzes the interconversion of L-alanine and D-alanine. Provides the D-alanine required for cell wall biosynthesis. The protein is Alanine racemase, biosynthetic (alr) of Escherichia coli O157:H7.